Reading from the N-terminus, the 147-residue chain is uncharacterized protein (147 aa).

The 137-residue stretch at 1–137 (MRDNTIGSLI…LYELMTKVHK (137 aa)) folds into the HTH marR-type domain. A DNA-binding region (H-T-H motif) is located at residues 53–76 (QMELAEKVTVTQGGISRMLTRLEK).

This is an uncharacterized protein from Bacillus thuringiensis subsp. konkukian (strain 97-27).